The chain runs to 379 residues: MDFNLTREQELVRQMVREFAENEVKPIAAEIDETERFPMENVKKMGQYGMMGIPFSKEYGGAGGDVLSYIIAVEELSKVCGTTGVILSAHTSLCASLINEHGTEEQKQKYLVPLAKGEKIGAYGLTEPNAGTDSGAQQTVAVLEGDHYVINGSKIFITNGGVADTFVIFAMTDRTKGTKGISAFIIEKGFKGFSIGKVEQKLGIRASSTTELVFEDMIVPVENMIGKEGKGFPIAMKTLDGGRIGIAAQALGIAEGAFNEARAYMKERKQFGRSLDKFQGLAWMMADMDVAIESARYLVYKAAYLKQAGLPYTVDAARAKLHAANVAMDVTTKAVQLFGGYGYTKDYPVERMMRDAKITEIYEGTSEVQKLVISGKIFR.

This sequence belongs to the acyl-CoA dehydrogenase family. Requires FAD as cofactor.

The enzyme catalyses butanoyl-CoA + oxidized [electron-transfer flavoprotein] + H(+) = (2E)-butenoyl-CoA + reduced [electron-transfer flavoprotein]. It carries out the reaction a short-chain 2,3-saturated fatty acyl-CoA + oxidized [electron-transfer flavoprotein] + H(+) = a short-chain (2E)-enoyl-CoA + reduced [electron-transfer flavoprotein]. It participates in lipid metabolism; butanoate metabolism. The sequence is that of Acyl-CoA dehydrogenase, short-chain specific (bcd) from Clostridium acetobutylicum (strain ATCC 824 / DSM 792 / JCM 1419 / IAM 19013 / LMG 5710 / NBRC 13948 / NRRL B-527 / VKM B-1787 / 2291 / W).